Reading from the N-terminus, the 264-residue chain is Osteopontin (264 aa).

A signal peptide spans 1-16; it reads MKLAFLCLCFISIAAA. 2 disordered regions span residues 21 to 141 and 166 to 264; these read KSRQ…RGDS and IEDD…EVTR. Positions 31-51 are enriched in basic and acidic residues; it reads SEEKYDPRSHHTHRYHQDHVD. Positions 52–73 are enriched in polar residues; sequence SQSQEHLQQTQNDLASLQQTHY. The segment covering 97 to 118 has biased composition (acidic residues); sequence AVDDDDDDDNDSNDTDESDEVV. Asparagine 106 and asparagine 109 each carry an N-linked (GlcNAc...) asparagine glycan. The Cell attachment site signature appears at 132 to 134; it reads RGD. Residues 186–212 are compositionally biased toward basic and acidic residues; it reads KESREQDSRELAQHQSVENDSRPRFDS. Residues asparagine 204 and asparagine 242 are each glycosylated (N-linked (GlcNAc...) asparagine). The segment covering 233-246 has biased composition (polar residues); it reads ASRSAVDTSNQTLE. Positions 252-264 are enriched in basic and acidic residues; it reads EDRHSIENNEVTR.

The protein belongs to the osteopontin family. Extensively phosphorylated on serine residues.

It is found in the secreted. In terms of biological role, major non-collagenous bone protein that binds tightly to hydroxyapatite. Appears to form an integral part of the mineralized matrix. Probably important to cell-matrix interaction. Acts as a cytokine involved in enhancing production of interferon-gamma and interleukin-12 and reducing production of interleukin-10 and is essential in the pathway that leads to type I immunity. This Gallus gallus (Chicken) protein is Osteopontin (SPP1).